Consider the following 363-residue polypeptide: UDP-N-acetylglucosamine--N-acetylmuramyl-(pentapeptide) pyrophosphoryl-undecaprenol N-acetylglucosamine transferase (363 aa).

Residues 12-14, serine 196, and glutamine 291 each bind UDP-N-acetyl-alpha-D-glucosamine; that span reads TAG.

It belongs to the glycosyltransferase 28 family. MurG subfamily.

The protein resides in the cell inner membrane. The enzyme catalyses di-trans,octa-cis-undecaprenyl diphospho-N-acetyl-alpha-D-muramoyl-L-alanyl-D-glutamyl-meso-2,6-diaminopimeloyl-D-alanyl-D-alanine + UDP-N-acetyl-alpha-D-glucosamine = di-trans,octa-cis-undecaprenyl diphospho-[N-acetyl-alpha-D-glucosaminyl-(1-&gt;4)]-N-acetyl-alpha-D-muramoyl-L-alanyl-D-glutamyl-meso-2,6-diaminopimeloyl-D-alanyl-D-alanine + UDP + H(+). Its pathway is cell wall biogenesis; peptidoglycan biosynthesis. Cell wall formation. Catalyzes the transfer of a GlcNAc subunit on undecaprenyl-pyrophosphoryl-MurNAc-pentapeptide (lipid intermediate I) to form undecaprenyl-pyrophosphoryl-MurNAc-(pentapeptide)GlcNAc (lipid intermediate II). This is UDP-N-acetylglucosamine--N-acetylmuramyl-(pentapeptide) pyrophosphoryl-undecaprenol N-acetylglucosamine transferase from Legionella pneumophila (strain Corby).